A 430-amino-acid polypeptide reads, in one-letter code: Bystin (430 aa).

2 stretches are compositionally biased toward basic residues: residues 1–12 (MGKDKKDRKHKG) and 26–35 (PSKRVKHRRE). 2 disordered regions span residues 1-45 (MGKD…ESFV) and 65-113 (MEEY…SETY). Over residues 68 to 78 (YGFRKTGDRKT) the composition is skewed to basic and acidic residues. A compositionally biased stretch (acidic residues) spans 93–104 (RIDDDDEDDSDD).

This sequence belongs to the bystin family.

The protein localises to the nucleus. The protein resides in the nucleolus. Functionally, required for processing of 20S pre-rRNA precursor and biogenesis of 40S ribosomal subunits. This Nematostella vectensis (Starlet sea anemone) protein is Bystin (bysl).